The chain runs to 43 residues: Protein PsbN (43 aa).

A helical transmembrane segment spans residues glycine 4 to tyrosine 24.

Belongs to the PsbN family.

It is found in the plastid. The protein localises to the chloroplast thylakoid membrane. Its function is as follows. May play a role in photosystem I and II biogenesis. In Chaetosphaeridium globosum (Charophycean green alga), this protein is Protein PsbN.